The sequence spans 380 residues: uncharacterized protein (380 aa).

Residues Asp256 to Pro301 are a coiled coil.

This is an uncharacterized protein from Pasteurella multocida (strain Pm70).